The sequence spans 503 residues: Aromatase (503 aa).

3 helical membrane passes run 19–39 (EVMP…LLVW), 51–71 (GYCM…MGIG), and 303–323 (MLIA…FLIA). Positions 309 and 374 each coordinate substrate. Position 437 (Cys-437) interacts with heme.

It belongs to the cytochrome P450 family. It depends on heme as a cofactor.

Its subcellular location is the endoplasmic reticulum membrane. The protein resides in the microsome membrane. It catalyses the reaction testosterone + 3 reduced [NADPH--hemoprotein reductase] + 3 O2 = 17beta-estradiol + formate + 3 oxidized [NADPH--hemoprotein reductase] + 4 H2O + 4 H(+). The enzyme catalyses androst-4-ene-3,17-dione + 3 reduced [NADPH--hemoprotein reductase] + 3 O2 = estrone + formate + 3 oxidized [NADPH--hemoprotein reductase] + 4 H2O + 4 H(+). The catalysed reaction is androst-4-ene-3,17-dione + reduced [NADPH--hemoprotein reductase] + O2 = 19-hydroxyandrost-4-ene-3,17-dione + oxidized [NADPH--hemoprotein reductase] + H2O + H(+). It carries out the reaction 19-hydroxyandrost-4-ene-3,17-dione + reduced [NADPH--hemoprotein reductase] + O2 = 19-oxo-androst-4-ene-3,17-dione + oxidized [NADPH--hemoprotein reductase] + 2 H2O + H(+). It catalyses the reaction 19-oxo-androst-4-ene-3,17-dione + reduced [NADPH--hemoprotein reductase] + O2 = estrone + formate + oxidized [NADPH--hemoprotein reductase] + H2O + 2 H(+). The enzyme catalyses estrone + reduced [NADPH--hemoprotein reductase] + O2 = 2-hydroxyestrone + oxidized [NADPH--hemoprotein reductase] + H2O + H(+). The catalysed reaction is 17beta-hydroxy-5alpha-androstan-3-one + reduced [NADPH--hemoprotein reductase] + O2 = 17beta,19-dihydroxy-3-oxo-5alpha-androstanone + oxidized [NADPH--hemoprotein reductase] + H2O + H(+). It carries out the reaction 17beta,19-dihydroxy-3-oxo-5alpha-androstanone + reduced [NADPH--hemoprotein reductase] + O2 = 17beta-hydroxy-3,19-dioxo-5alpha-androstanone + oxidized [NADPH--hemoprotein reductase] + 2 H2O + H(+). It catalyses the reaction 17beta-hydroxy-3,19-dioxo-5alpha-androstanone + reduced [NADPH--hemoprotein reductase] + O2 = 17beta-hydroxy-3-oxo-19-nor-5alpha-androst-1-ene + formate + oxidized [NADPH--hemoprotein reductase] + H2O + 2 H(+). It participates in steroid hormone biosynthesis. In terms of biological role, a cytochrome P450 monooxygenase that catalyzes the conversion of C19 androgens, androst-4-ene-3,17-dione (androstenedione) and testosterone to the C18 estrogens, estrone and estradiol, respectively. Catalyzes three successive oxidations of C19 androgens: two conventional oxidations at C19 yielding 19-hydroxy and 19-oxo/19-aldehyde derivatives, followed by a third oxidative aromatization step that involves C1-beta hydrogen abstraction combined with cleavage of the C10-C19 bond to yield a phenolic A ring and formic acid. Alternatively, the third oxidative reaction yields a 19-norsteroid and formic acid. Converts dihydrotestosterone to delta1,10-dehydro 19-nordihydrotestosterone and may play a role in homeostasis of this potent androgen. Also displays 2-hydroxylase activity toward estrone. Mechanistically, uses molecular oxygen inserting one oxygen atom into a substrate, and reducing the second into a water molecule, with two electrons provided by NADPH via cytochrome P450 reductase (CPR; NADPH-ferrihemoprotein reductase). The chain is Aromatase (CYP19A1) from Canis lupus familiaris (Dog).